The following is a 331-amino-acid chain: Adenosine deaminase (331 aa).

Zn(2+) contacts are provided by H12 and H14. Residues H14, D16, and G170 each contribute to the substrate site. Position 197 (H197) interacts with Zn(2+). E200 serves as the catalytic Proton donor. Zn(2+) is bound at residue D278.

The protein belongs to the metallo-dependent hydrolases superfamily. Adenosine and AMP deaminases family. Adenosine deaminase subfamily. Zn(2+) serves as cofactor.

The catalysed reaction is adenosine + H2O + H(+) = inosine + NH4(+). It carries out the reaction 2'-deoxyadenosine + H2O + H(+) = 2'-deoxyinosine + NH4(+). In terms of biological role, catalyzes the hydrolytic deamination of adenosine and 2-deoxyadenosine. The polypeptide is Adenosine deaminase (Vibrio vulnificus (strain CMCP6)).